Here is a 376-residue protein sequence, read N- to C-terminus: 2-oxoglutarate synthase subunit KorA (376 aa).

As to quaternary structure, heterotetramer of the KorA, KorB, KorC and KorD subunits.

It carries out the reaction 2 oxidized [2Fe-2S]-[ferredoxin] + 2-oxoglutarate + CoA = succinyl-CoA + 2 reduced [2Fe-2S]-[ferredoxin] + CO2 + H(+). In Methanothermobacter thermautotrophicus (strain ATCC 29096 / DSM 1053 / JCM 10044 / NBRC 100330 / Delta H) (Methanobacterium thermoautotrophicum), this protein is 2-oxoglutarate synthase subunit KorA (korA).